A 1028-amino-acid chain; its full sequence is RNA cytidine acetyltransferase 2 (1028 aa).

ATP is bound by residues 286 to 295 (GRGKSAALGL) and arginine 458. The 184-residue stretch at 546-729 (VLLGPVDESQ…FAPFYVSQIP (184 aa)) folds into the N-acetyltransferase domain. Acetyl-CoA-binding positions include 617-619 (IAV), 624-630 (MKMGYGS), and lysine 717. Residues 982–1028 (SGIISVKSTKSENENGFDKSTKKRSSDKRSSSSSKSKSSKKRKSLKE) are disordered. The segment covering 990-1001 (TKSENENGFDKS) has biased composition (basic and acidic residues). Positions 1018–1028 (KSSKKRKSLKE) are enriched in basic residues.

This sequence belongs to the RNA cytidine acetyltransferase family. NAT10 subfamily.

Its subcellular location is the nucleus. It is found in the nucleolus. The catalysed reaction is a cytidine in 18S rRNA + acetyl-CoA + ATP + H2O = an N(4)-acetylcytidine in 18S rRNA + ADP + phosphate + CoA + H(+). It carries out the reaction a cytidine in tRNA + acetyl-CoA + ATP + H2O = an N(4)-acetylcytidine in tRNA + ADP + phosphate + CoA + H(+). Its function is as follows. RNA cytidine acetyltransferase with specificity toward both 18S rRNA and tRNAs. Catalyzes the formation of N(4)-acetylcytidine (ac4C) in 18S rRNA. Required for early nucleolar cleavages of precursor rRNA at sites A0, A1 and A2 during 18S rRNA synthesis. Catalyzes the formation of ac4C in serine and leucine tRNAs. Requires a tRNA-binding adapter protein for full tRNA acetyltransferase activity but not for 18S rRNA acetylation. The protein is RNA cytidine acetyltransferase 2 of Arabidopsis thaliana (Mouse-ear cress).